Reading from the N-terminus, the 1656-residue chain is Probable phospholipid-transporting ATPase DNF3 (1656 aa).

Residues 1 to 164 are Lumenal-facing; sequence MGIADGQRRR…PRQLYAQFSK (164 aa). Residues 36–74 are disordered; sequence ELEDINESKTFSGSDNNDKDDRDETSGNYAAEEDYEMEE. Residues 51-60 are compositionally biased toward basic and acidic residues; it reads NNDKDDRDET. The chain crosses the membrane as a helical span at residues 165 to 185; the sequence is LANTYFFIVAVLQMIPGWSTT. Residues 186–451 lie on the Cytoplasmic side of the membrane; the sequence is GTYTTIIPLC…RTKAPKLQRK (266 aa). The chain crosses the membrane as a helical span at residues 452–472; it reads INMIIVFMVFVVATISLFSYL. Residues 473-495 lie on the Lumenal side of the membrane; sequence GHVLHKKKYIDQNKAWYLFQADA. A helical membrane pass occupies residues 496 to 516; it reads GVAPTIMSFIIMYNTVIPLSL. The Cytoplasmic portion of the chain corresponds to 517–1157; it reads YVTMEIIKVV…ISKMNAVSQE (641 aa). Aspartate 566 functions as the 4-aspartylphosphate intermediate in the catalytic mechanism. ATP-binding residues include aspartate 566, lysine 567, and threonine 568. Aspartate 566 is a binding site for Mg(2+). Threonine 568 provides a ligand contact to Mg(2+). Serine 627 bears the Phosphoserine mark. ATP-binding positions include glutamate 765, phenylalanine 813, serine 815, lysine 818, lysine 838, arginine 1034, threonine 1035, threonine 1114, glycine 1115, aspartate 1116, 1167 to 1174, arginine 1202, and lysine 1208; that span reads VVVIDGAT. A helical membrane pass occupies residues 1158–1178; it reads VDSGNIAHCVVVIDGATMAMF. Topologically, residues 1179–1318 are lumenal; the sequence is EGNPTYMSVF…MFSGSSLYEP (140 aa). Mg(2+) is bound at residue aspartate 1229. ATP contacts are provided by asparagine 1232 and aspartate 1233. The helical transmembrane segment at 1319–1339 threads the bilayer; that stretch reads WSLSMFNTLFTSLPVLCIGMF. Over 1340 to 1365 the chain is Cytoplasmic; sequence EKDLKPMTLLTVPELYSYGRLSQGFN. A helical transmembrane segment spans residues 1366-1386; that stretch reads WLIFMEWVILATTNSLIITFL. Topologically, residues 1387–1395 are lumenal; the sequence is NVVMWGMSS. The helical transmembrane segment at 1396-1416 threads the bilayer; that stretch reads LSDNTMYPLGLINFTAIVALI. The Cytoplasmic portion of the chain corresponds to 1417 to 1432; sequence NVKSQFVEMHNRNWLA. A helical membrane pass occupies residues 1433–1453; sequence FTSVVLSCGGWLVWCCALPIL. At 1454–1473 the chain is on the lumenal side; it reads NNTDQIYDVAYGFYNHFGKD. Residues 1474 to 1494 traverse the membrane as a helical segment; the sequence is ITFWCTSLVLALLPITLDIVY. Residues 1495–1656 lie on the Cytoplasmic side of the membrane; that stretch reads KTFKVMIWPS…IIQARLKDLE (162 aa). Residues 1554–1576 form a disordered region; it reads PRTNSRASAKTHNSSIYSMSNGN.

It belongs to the cation transport ATPase (P-type) (TC 3.A.3) family. Type IV subfamily. As to quaternary structure, component of a flippase complex consisting of DNF3 and YNR048W/CRF1. Interacts with YNR048W/CRF1; the interaction is direct and required for proper expression and endoplasmic reticulum (ER) export of either partner. The cofactor is Mg(2+).

It is found in the golgi apparatus. Its subcellular location is the trans-Golgi network membrane. It localises to the endosome membrane. It catalyses the reaction ATP + H2O + phospholipidSide 1 = ADP + phosphate + phospholipidSide 2.. The enzyme catalyses a 1,2-diacyl-sn-glycero-3-phosphocholine(out) + ATP + H2O = a 1,2-diacyl-sn-glycero-3-phosphocholine(in) + ADP + phosphate + H(+). It carries out the reaction a 1,2-diacyl-sn-glycero-3-phosphoethanolamine(out) + ATP + H2O = a 1,2-diacyl-sn-glycero-3-phosphoethanolamine(in) + ADP + phosphate + H(+). Catalytic component of a P4-ATPase flippase complex which catalyzes the hydrolysis of ATP coupled to the transport of phosphatidylcholine and small amounts of phosphatidylethanolamine from the lumen to the cytosolic leaflet of the trans-Golgi network and ensures the maintenance of asymmetric distribution of phospholipids. May be involved in transport from early endosomes to the trans-Golgi network (TGN). In Saccharomyces cerevisiae (strain ATCC 204508 / S288c) (Baker's yeast), this protein is Probable phospholipid-transporting ATPase DNF3 (DNF3).